The following is a 513-amino-acid chain: GMP synthase [glutamine-hydrolyzing] (513 aa).

Residues 3–192 (TVVVLDYGSQ…VSKVAKMEKN (190 aa)) form the Glutamine amidotransferase type-1 domain. The active-site Nucleophile is the cysteine 80. Active-site residues include histidine 166 and glutamate 168. Positions 193-388 (WKMTDFIEEK…LGLPDEMINR (196 aa)) constitute a GMPS ATP-PPase domain. 220–226 (SGGVDSS) is an ATP binding site.

As to quaternary structure, homodimer.

The enzyme catalyses XMP + L-glutamine + ATP + H2O = GMP + L-glutamate + AMP + diphosphate + 2 H(+). It functions in the pathway purine metabolism; GMP biosynthesis; GMP from XMP (L-Gln route): step 1/1. Its function is as follows. Catalyzes the synthesis of GMP from XMP. The chain is GMP synthase [glutamine-hydrolyzing] from Thermosipho africanus (strain TCF52B).